The chain runs to 237 residues: N-alpha-acetyltransferase 40 (237 aa).

Gly2 carries N-myristoyl glycine lipidation. Residues 63 to 216 (SGLEPATVDW…EDCSYEILSR (154 aa)) enclose the N-acetyltransferase domain. Residues Tyr85, 127–129 (DVE), and Tyr138 contribute to the substrate site. Acetyl-CoA is bound by residues 140–142 (VQL) and 148–153 (RKGLGK). Residue Thr174 participates in substrate binding. Asn179 provides a ligand contact to acetyl-CoA. Substrate is bound by residues Ser197 and Tyr211.

It belongs to the acetyltransferase family. NAA40 subfamily. As to expression, widely expressed; with the highest expression level in liver and the lowest expression in brain (at protein level).

The protein localises to the cytoplasm. The protein resides in the nucleus. It catalyses the reaction N-terminal L-seryl-[histone H4] + acetyl-CoA = N-terminal N(alpha)-acetyl-L-seryl-[histone H4] + CoA + H(+). The catalysed reaction is N-terminal L-seryl-[histone H2A] + acetyl-CoA = N-terminal N(alpha)-acetyl-L-seryl-[histone H2A] + CoA + H(+). N-alpha-acetyltransferase that specifically mediates the acetylation of the N-terminal residues of histones H4 and H2A. In contrast to other N-alpha-acetyltransferase, has a very specific selectivity for histones H4 and H2A N-terminus and specifically recognizes the 'Ser-Gly-Arg-Gly sequence'. Acts as a negative regulator of apoptosis. May play a role in hepatic lipid metabolism. This chain is N-alpha-acetyltransferase 40, found in Homo sapiens (Human).